Consider the following 93-residue polypeptide: MNAFSIILLLLSVLLINAQFQPRTSNRGTIFRPMTRNSGIVGRRGGPVAPAPFRNNVQKPGTRPPGFKPPSGVAKKLNSAVDFRALARVLLKQ.

The tract at residues 26-73 is disordered; it reads NRGTIFRPMTRNSGIVGRRGGPVAPAPFRNNVQKPGTRPPGFKPPSGV.

This is an uncharacterized protein from Caenorhabditis elegans.